The chain runs to 349 residues: Neutral protease 2 homolog ACLA_052720 (349 aa).

A signal peptide spans 1–19; sequence MQLTVLASAILALAQGALA. A propeptide spanning residues 20-172 is cleaved from the precursor; sequence IPAKAPALDV…PAAINLLDRR (153 aa). Disulfide bonds link cysteine 178–cysteine 250 and cysteine 257–cysteine 275. Histidine 300 is a Zn(2+) binding site. Glutamate 301 is an active-site residue. 2 residues coordinate Zn(2+): histidine 304 and aspartate 315.

The protein belongs to the peptidase M35 family. It depends on Zn(2+) as a cofactor.

The protein resides in the secreted. It catalyses the reaction Preferential cleavage of bonds with hydrophobic residues in P1'. Also 3-Asn-|-Gln-4 and 8-Gly-|-Ser-9 bonds in insulin B chain.. Functionally, secreted metalloproteinase that allows assimilation of proteinaceous substrates. Shows high activities on basic nuclear substrates such as histone and protamine. In Aspergillus clavatus (strain ATCC 1007 / CBS 513.65 / DSM 816 / NCTC 3887 / NRRL 1 / QM 1276 / 107), this protein is Neutral protease 2 homolog ACLA_052720.